Reading from the N-terminus, the 335-residue chain is MGRLILEHTLQGHKGRIWGVAWHPKGNVFASCGEDKAIRIWSLTGNTWGTKTILSDGHKRTIREIRWSPCGQYLASASFDATTAIWSKSSGEFECNATLEGHENEVKSVSWSRSGGLLATCSRDKSVWIWEVAGDDEFECAAVLNPHTQDVKRVVWHPTKDVLASASYDNTIKMFAEEPIDNDWDCTATLTSHTSTVWGIDFDADGERLVSCSDDTTIKIWRAYHPGNTAGVATPEQQTVWKCVCTVSGQHSRAIYDVSWCKLTGLIATACGDDGIRIFKETSDSKPDEPTFEQITAEEGAHDQDVNSVQWNPVVAGQLISCSDDGTIKIWKVSE.

WD repeat units lie at residues 12–51 (GHKG…WGTK), 57–96 (GHKR…FECN), 101–140 (GHEN…EFEC), 146–185 (PHTQ…NDWD), 192–231 (SHTS…NTAG), 250–289 (QHSR…KPDE), and 301–335 (AHDQ…KVSE).

The protein belongs to the WD repeat CIA1 family.

Functionally, essential component of the cytosolic iron-sulfur (Fe/S) protein assembly machinery. Required for the maturation of extramitochondrial Fe/S proteins. The chain is Probable cytosolic iron-sulfur protein assembly protein Ciao1 from Drosophila sechellia (Fruit fly).